The primary structure comprises 1066 residues: Probable sucrose-phosphate synthase 4 (1066 aa).

Disordered stretches follow at residues 132–166 (YAAA…GRMP) and 688–714 (PRHP…SLRD). Basic and acidic residues predominate over residues 143 to 162 (EGEKGENINESSSTHDESTR).

It belongs to the glycosyltransferase 1 family. In terms of assembly, homodimer or homotetramer. As to expression, expressed in germinating seeds.

It catalyses the reaction beta-D-fructose 6-phosphate + UDP-alpha-D-glucose = sucrose 6(F)-phosphate + UDP + H(+). The protein operates within glycan biosynthesis; sucrose biosynthesis; sucrose from D-fructose 6-phosphate and UDP-alpha-D-glucose: step 1/2. With respect to regulation, activity is regulated by phosphorylation and moderated by concentration of metabolites and light. Its function is as follows. Plays a role in photosynthetic sucrose synthesis by catalyzing the rate-limiting step of sucrose biosynthesis from UDP-glucose and fructose- 6-phosphate. Involved in the regulation of carbon partitioning in the leaves of plants. May regulate the synthesis of sucrose and therefore play a major role as a limiting factor in the export of photoassimilates out of the leaf. Plays a role for sucrose availability that is essential for plant growth and fiber elongation. The polypeptide is Probable sucrose-phosphate synthase 4 (SPS4) (Oryza sativa subsp. japonica (Rice)).